The sequence spans 408 residues: Peptidase T-like protein RB0614 (408 aa).

Zn(2+) is bound at residue histidine 80. Aspartate 82 is an active-site residue. Aspartate 142 lines the Zn(2+) pocket. Catalysis depends on glutamate 174, which acts as the Proton acceptor. Zn(2+) is bound by residues glutamate 175, aspartate 198, and histidine 380.

This sequence belongs to the peptidase M20B family. Zn(2+) serves as cofactor.

The chain is Peptidase T-like protein RB0614 from Rhizobium meliloti (strain 1021) (Ensifer meliloti).